A 151-amino-acid polypeptide reads, in one-letter code: Phospholipase A2 inhibitor BjussuMIP (151 aa).

The signal sequence occupies residues 1-4; it reads LANG. In terms of domain architecture, C-type lectin spans 31–146; it reads LKYAFLTVHK…CDENLLVVCE (116 aa). 2 disulfides stabilise this stretch: Cys-68–Cys-145 and Cys-123–Cys-137. The N-linked (GlcNAc...) asparagine glycan is linked to Asn-107.

The protein belongs to the alpha-type phospholipase A2 inhibitor family. As to quaternary structure, oligomer. As to expression, expressed by the liver.

It is found in the secreted. Its function is as follows. Inhibits enzymatic, anticoagulant, edema formation, myotoxicity activities induced by snakes phospholipase A2. Is oligomeric, but it is probable that each of its subunits can bind and inactive a PLA2 molecule. This chain is Phospholipase A2 inhibitor BjussuMIP, found in Bothrops jararacussu (Jararacussu).